We begin with the raw amino-acid sequence, 482 residues long: Probable cytosol aminopeptidase (482 aa).

The Mn(2+) site is built by Lys251 and Asp256. Lys263 is an active-site residue. The Mn(2+) site is built by Asp274, Asp333, and Glu335. The active site involves Arg337.

Belongs to the peptidase M17 family. The cofactor is Mn(2+).

Its subcellular location is the cytoplasm. The enzyme catalyses Release of an N-terminal amino acid, Xaa-|-Yaa-, in which Xaa is preferably Leu, but may be other amino acids including Pro although not Arg or Lys, and Yaa may be Pro. Amino acid amides and methyl esters are also readily hydrolyzed, but rates on arylamides are exceedingly low.. The catalysed reaction is Release of an N-terminal amino acid, preferentially leucine, but not glutamic or aspartic acids.. Functionally, presumably involved in the processing and regular turnover of intracellular proteins. Catalyzes the removal of unsubstituted N-terminal amino acids from various peptides. The chain is Probable cytosol aminopeptidase from Acinetobacter baumannii (strain AB307-0294).